Here is a 217-residue protein sequence, read N- to C-terminus: Large ribosomal subunit protein uL3 (217 aa).

Residues 127–162 (GFSRGPMSHGSKNHRAPGSTGAGTTPGRIYPGKRMA) are disordered. Low complexity predominate over residues 142–153 (APGSTGAGTTPG).

It belongs to the universal ribosomal protein uL3 family. As to quaternary structure, part of the 50S ribosomal subunit. Forms a cluster with proteins L14 and L19.

In terms of biological role, one of the primary rRNA binding proteins, it binds directly near the 3'-end of the 23S rRNA, where it nucleates assembly of the 50S subunit. The sequence is that of Large ribosomal subunit protein uL3 from Prochlorococcus marinus (strain MIT 9301).